The following is a 200-amino-acid chain: DNA dC-&gt;dU-editing enzyme APOBEC-3H (200 aa).

The CMP/dCMP-type deaminase domain occupies leucine 4 to leucine 126. Histidine 54 lines the Zn(2+) pocket. Glutamate 56 acts as the Proton donor in catalysis. Zn(2+) contacts are provided by cysteine 85 and cysteine 88. Residues tyrosine 160–isoleucine 182 adopt a coiled-coil conformation.

This sequence belongs to the cytidine and deoxycytidylate deaminase family. In terms of assembly, homodimer. Interacts with AGO1, AGO2 and AGO3. The cofactor is Zn(2+). In terms of processing, (Microbial infection) Following infection by some HIV-1 strains, such as isolate BRU/LAI, can be ubiquitinated by a cullin-5-RING E3 ubiquitin-protein ligase complex (ECS complex) hijacked by the HIV-1 Vif protein, leading to its degradation. Ubiquitination by the ECS complex is however less efficent compared to APOBEC3G or APOBEC3G. Expressed in lymphoid organs. Also detected in non-lymphoid tissues including lung, testis, ovary, fetal liver and skin.

The protein localises to the cytoplasm. It localises to the nucleus. It is found in the P-body. The catalysed reaction is a 2'-deoxycytidine in single-stranded DNA + H2O + H(+) = a 2'-deoxyuridine in single-stranded DNA + NH4(+). With respect to regulation, APOBEC3H activity is regulated by RNA. While RNA-binding inhibits the DNA deaminase activity, double-stranded RNA is required for HIV-1 restriction by promoting APOBEC3H homodimerization and packaging into retroviral nucleocapsids. Its activity is regulated as follows. (Microbial infection) Antiviral activity is inhibited to some extent by the HIV-1 virion infectivity factor (VIF), that prevents its incorporation into progeny virions by both inhibiting its translation and/or by inducing its ubiquitination and subsequent degradation by the 26S proteasome. Its function is as follows. DNA deaminase (cytidine deaminase) which acts as an inhibitor of retrovirus replication and retrotransposon mobility via deaminase-dependent and -independent mechanisms. The A3H-var/haplotype 2 exhibits antiviral activity against vif-deficient HIV-1. After the penetration of retroviral nucleocapsids into target cells of infection and the initiation of reverse transcription, it can induce the conversion of cytosine to uracil in the minus-sense single-strand viral DNA, leading to G-to-A hypermutations in the subsequent plus-strand viral DNA. The resultant detrimental levels of mutations in the proviral genome, along with a deamination-independent mechanism that works prior to the proviral integration, together exert efficient antiretroviral effects in infected target cells. Selectively targets single-stranded DNA and does not deaminate double-stranded DNA or single- or double-stranded RNA. Exhibits antiviral activity also against T-cell leukemia virus type 1 (HTLV-1) and may inhibit the mobility of LTR and non-LTR retrotransposons. The polypeptide is DNA dC-&gt;dU-editing enzyme APOBEC-3H (Homo sapiens (Human)).